A 437-amino-acid polypeptide reads, in one-letter code: MHPQREVIKFRKGRFYKNPTISSFKRIVPSNRPVAVDVNGFPQRHRRHYVQAGMFANAKSSLPSSANVSFQNSDDNLSTSRGRSASPTPIRKFSNFPRSNISKTWDFSDIGVKKDQQTRNQLPPMKRLNSEEEEEQQGKTKTTKKETIGASTVGRSVKHVLPWLKKWGSQDAESNMKPMRIERLKVSPTLDQSINRFSSRLRRIDSIRPIPLQNHTGTTIGTVEKALVAVALAKTKSEEYQKNPVFDYLIERSDWLLYREEFNDKIDYLPQDPFYSHDIVSSDFEEYEQEIEEARDPYYLEIGSEEKQAPIKASASKPRFDEANFHNEDPLNLDSQEDFFETSYLPKNADESKKHQKSMLPSFGDYTTKSDDERQKNRLVSFDTDSSVPRTSRKRNHQEALSPSKSNPDYSPFNYDLFSPPSVPKKPSSSSSNYSIW.

Over residues 63–87 the composition is skewed to polar residues; sequence PSSANVSFQNSDDNLSTSRGRSASP. 3 disordered regions span residues 63-97, 112-147, and 346-437; these read PSSANVSFQNSDDNLSTSRGRSASPTPIRKFSNFP, VKKDQQTRNQLPPMKRLNSEEEEEQQGKTKTTKKET, and PKNA…YSIW. Over residues 399-409 the composition is skewed to polar residues; that stretch reads EALSPSKSNPD. Residues 425 to 437 show a composition bias toward low complexity; sequence KKPSSSSSNYSIW.

This is an uncharacterized protein from Caenorhabditis elegans.